The sequence spans 166 residues: MKLAKTRFRPAPRELDLNIDYRVAATGLPRPSDFARWVGAALQGRSRPAQIGLHVVDNAEGQRLNAEYRGKDSATNVLSFALNEGEEAVAGLPLMGDIVLAAEVVAREAAEQGKDLHAHYAHLTVHGMLHLQGHDHETDTEAEAMEALETVILARLGYTDPYAVEH.

Zn(2+)-binding residues include H126, H130, and H136.

This sequence belongs to the endoribonuclease YbeY family. Requires Zn(2+) as cofactor.

Its subcellular location is the cytoplasm. In terms of biological role, single strand-specific metallo-endoribonuclease involved in late-stage 70S ribosome quality control and in maturation of the 3' terminus of the 16S rRNA. This Laribacter hongkongensis (strain HLHK9) protein is Endoribonuclease YbeY.